We begin with the raw amino-acid sequence, 741 residues long: Phage T7 exclusion protein (741 aa).

The KAP NTPase domain occupies 27–334 (FGNIAENISR…NSLIFLYPGM (308 aa)).

Responsible for the exclusion of phage T7 by plasmid F. Growth of bacteriophage T7 is inhibited in cells of E.coli that carries the plasmid F. In Escherichia coli (strain K12), this protein is Phage T7 exclusion protein (pifA).